Consider the following 318-residue polypeptide: Retinol dehydrogenase 5 (318 aa).

The helical transmembrane segment at 1-23 (MWLPLLLGALLWAVLWLLRDRQS) threads the bilayer. Over 24–288 (LPASDAFIFI…TRYSPGWDAK (265 aa)) the chain is Lumenal. 32 to 56 (FITGCDSGFGRLLALQLDQKGFQVL) provides a ligand contact to NADP(+). S163 provides a ligand contact to substrate. Y175 (proton acceptor) is an active-site residue. A helical membrane pass occupies residues 289–309 (LLWLPASYLPARVVDAVLTWI). The Cytoplasmic segment spans residues 310–318 (LPRPAQSVS).

It belongs to the short-chain dehydrogenases/reductases (SDR) family. As to quaternary structure, homodimer. Expressed in eye, liver, kidney, brain, intestine, placenta, epididymus and submaxillary gland. In eye, strongly expressed in the retinal pigment epithelium, with lower expression levels detected in the inner segment of the photoreceptor cells and in the outer plexiform layer. In kidney, strong expression detected in the distal tubules and the transitional epithelium in the renal pelvis, with weaker expression detected in the epithelium of the outer stripe of the outer zone of the medulla. In liver, detected in hepatocytes in the centrilobular area. In lung, present in club cells in the epithelium of the bronchiole, in parenchyma and in cartilage surrounding the secondary bronchi. In skin, expressed in epidermis, hair follicles and mast cells in the dermis. Expressed in heart. Not detected in heart. Not detected in lung, spleen, skeletal muscle and testis.

The protein resides in the endoplasmic reticulum membrane. It catalyses the reaction 11-cis-retinol + NAD(+) = 11-cis-retinal + NADH + H(+). It carries out the reaction 9-cis-retinol + NAD(+) = 9-cis-retinal + NADH + H(+). The enzyme catalyses 13-cis-retinol + NAD(+) = 13-cis-retinal + NADH + H(+). The catalysed reaction is androsterone + NAD(+) = 5alpha-androstan-3,17-dione + NADH + H(+). It catalyses the reaction 5alpha-androstane-3alpha,17beta-diol + NAD(+) = 17beta-hydroxy-5alpha-androstan-3-one + NADH + H(+). It participates in cofactor metabolism; retinol metabolism. Its activity is regulated as follows. Inhibited by 9-cis-, 13-cis- and all-trans-retinoic acids, with the most potent inhibitor being 13-cis-retinoic acid. Weakly inhibited by oleic acid. Catalyzes the oxidation of cis-isomers of retinol, including 11-cis-, 9-cis-, and 13-cis-retinol in an NAD-dependent manner. Has no activity towards all-trans retinal. Plays a significant role in 11-cis retinol oxidation in the retinal pigment epithelium cells (RPE). Also recognizes steroids (androsterone, androstanediol) as its substrates. The polypeptide is Retinol dehydrogenase 5 (Mus musculus (Mouse)).